The following is a 130-amino-acid chain: Small ribosomal subunit protein uS9 (130 aa).

It belongs to the universal ribosomal protein uS9 family.

This Hamiltonella defensa subsp. Acyrthosiphon pisum (strain 5AT) protein is Small ribosomal subunit protein uS9.